Consider the following 361-residue polypeptide: MGNVLAASSPPAGPPPPPTPSLVGLPPPPPSPPGFTLPPLGGGLGTGSSTGRGSERTPGAAASGAAAASEDGSCGCLPNPGTFEECHRKCKELFPVQMEGVKLTVNKGLSNRFQVTHTVALGTIGESNYHFGVTYVGTKQLSPTEAFPVLVGDMDNSGSLNAQVIHQLSPGLRSKMAIQTQQSKFVNWQVDGEYRGSDFTAAVTLGNPDVLVGSGILVAHYLQSITPCLALGGELVYHRRPGEEGTVMSLAGKYTLNNWLATVTLGQAGMHATYYHKASDQLQVGVEFEASTRMQDTSASFGYQLDLPKANFLFKGSVNSNWIVGATLEKKLPPLPLTLSLCAFLNHRKNKFLCGFGLTIG.

The interval 1-73 is disordered; the sequence is MGNVLAASSP…GAAAASEDGS (73 aa). Residues 11-36 show a composition bias toward pro residues; it reads PAGPPPPPTPSLVGLPPPPPSPPGFT. A compositionally biased stretch (gly residues) spans 40–50; that stretch reads LGGGLGTGSST. Positions 51 to 69 are enriched in low complexity; it reads GRGSERTPGAAASGAAAAS.

It belongs to the Tom40 family. Forms part of the preprotein translocase complex of the outer mitochondrial membrane (TOM complex) which consists of at least 7 different proteins (TOMM5, TOMM6, TOMM7, TOMM20, TOMM22, TOMM40 and TOMM70). Interacts with mitochondrial targeting sequences. Interacts with TIMM29; linking the TIM22 complex to the TOM complex. Forms a complex with BCAP31 (via C-terminus) which mediates the translocation of components of the mitochondrial membrane respiratory chain NADH dehydrogenase (Complex I) from the cytosol to the mitochondria. Interacts (via N-terminus) with CYP1A1 (via mitochondrial targeting signal); this interaction is required for CYP1A1 translocation across the mitochondrial outer membrane.

Its subcellular location is the mitochondrion outer membrane. Its function is as follows. Channel-forming protein essential for import of protein precursors into mitochondria. Plays a role in the assembly of the mitochondrial membrane respiratory chain NADH dehydrogenase (Complex I) by forming a complex with BCAP31 and mediating the translocation of Complex I components from the cytosol to the mitochondria. The sequence is that of Mitochondrial import receptor subunit TOM40 homolog (Tomm40) from Mus musculus (Mouse).